The following is a 410-amino-acid chain: Cysteine desulfurase (410 aa).

Lys-227 is modified (N6-(pyridoxal phosphate)lysine). The active-site Cysteine persulfide intermediate is the Cys-365.

Belongs to the class-V pyridoxal-phosphate-dependent aminotransferase family. Csd subfamily. In terms of assembly, homodimer. Interacts with SufE and the SufBCD complex composed of SufB, SufC and SufD. The interaction with SufE is required to mediate the direct transfer of the sulfur atom from the S-sulfanylcysteine. It depends on pyridoxal 5'-phosphate as a cofactor.

The protein resides in the cytoplasm. The catalysed reaction is (sulfur carrier)-H + L-cysteine = (sulfur carrier)-SH + L-alanine. It catalyses the reaction L-selenocysteine + AH2 = hydrogenselenide + L-alanine + A + H(+). Its pathway is cofactor biosynthesis; iron-sulfur cluster biosynthesis. Functionally, cysteine desulfurases mobilize the sulfur from L-cysteine to yield L-alanine, an essential step in sulfur metabolism for biosynthesis of a variety of sulfur-containing biomolecules. Component of the suf operon, which is activated and required under specific conditions such as oxidative stress and iron limitation. Acts as a potent selenocysteine lyase in vitro, that mobilizes selenium from L-selenocysteine. Selenocysteine lyase activity is however unsure in vivo. The sequence is that of Cysteine desulfurase from Wigglesworthia glossinidia brevipalpis.